The chain runs to 110 residues: Small EDRK-rich factor 1 (110 aa).

The span at 1-30 (MARGNQRELARQKNMKKTQEISKGKRKEDS) shows a compositional bias: basic and acidic residues. Positions 1–61 (MARGNQRELA…GPHLPLKAPR (61 aa)) are disordered. Positions 11–17 (RQKNMKK) are required for SNCA binding. Residues 34 to 50 (SQRKQSSGGQKSESKMS) show a composition bias toward low complexity.

It belongs to the SERF family. In terms of assembly, interacts with SNCA; this interaction promotes the aggregation of SNCA. As to expression, isoform Long is predominantly expressed in heart, brain and skeletal muscle. Isoform Short and Isoform Long are expressed throughout the central nervous system, including spinal cord.

Its subcellular location is the cytoplasm. The protein resides in the cytosol. It is found in the nucleus. In terms of biological role, positive regulator of amyloid protein aggregation and proteotoxicity. Induces conformational changes in amyloid proteins, such as APP, HTT, and SNCA, driving them into compact formations preceding the formation of aggregates. In Homo sapiens (Human), this protein is Small EDRK-rich factor 1 (SERF1A).